The chain runs to 152 residues: Protein-export protein SecB (152 aa).

It belongs to the SecB family. Homotetramer, a dimer of dimers. One homotetramer interacts with 1 SecA dimer.

It is found in the cytoplasm. Its function is as follows. One of the proteins required for the normal export of preproteins out of the cell cytoplasm. It is a molecular chaperone that binds to a subset of precursor proteins, maintaining them in a translocation-competent state. It also specifically binds to its receptor SecA. The protein is Protein-export protein SecB of Rickettsia typhi (strain ATCC VR-144 / Wilmington).